The sequence spans 193 residues: Superoxide dismutase [Fe] (193 aa).

Residues H27, H74, D157, and H161 each contribute to the Fe cation site.

It belongs to the iron/manganese superoxide dismutase family. In terms of assembly, homodimer. Fe cation serves as cofactor.

The catalysed reaction is 2 superoxide + 2 H(+) = H2O2 + O2. Destroys superoxide anion radicals which are normally produced within the cells and which are toxic to biological systems. The sequence is that of Superoxide dismutase [Fe] (sodB) from Coxiella burnetii (strain RSA 493 / Nine Mile phase I).